Consider the following 264-residue polypeptide: Phycocyanobilin:ferredoxin oxidoreductase (264 aa).

It belongs to the HY2 family.

The enzyme catalyses (2R,3Z)-phycocyanobilin + 4 oxidized [2Fe-2S]-[ferredoxin] = biliverdin IXalpha + 4 reduced [2Fe-2S]-[ferredoxin] + 4 H(+). In terms of biological role, catalyzes the four-electron reduction of biliverdin IX-alpha (2-electron reduction at both the A and D rings); the reaction proceeds via an isolatable 2-electron intermediate, 181,182-dihydrobiliverdin. This Prochlorococcus marinus (strain MIT 9303) protein is Phycocyanobilin:ferredoxin oxidoreductase.